A 466-amino-acid chain; its full sequence is Soluble pyridine nucleotide transhydrogenase (466 aa).

An FAD-binding site is contributed by 36-45 (ERYNNVGGGC).

Belongs to the class-I pyridine nucleotide-disulfide oxidoreductase family. FAD is required as a cofactor.

It is found in the cytoplasm. It catalyses the reaction NAD(+) + NADPH = NADH + NADP(+). In terms of biological role, conversion of NADPH, generated by peripheral catabolic pathways, to NADH, which can enter the respiratory chain for energy generation. The sequence is that of Soluble pyridine nucleotide transhydrogenase from Yersinia pseudotuberculosis serotype O:1b (strain IP 31758).